The following is a 793-amino-acid chain: Coiled-coil domain-containing protein 175 (793 aa).

5 coiled-coil regions span residues 131–163 (EINTIKMRITRTENEIELLKKKITDLTKYNEAL), 205–377 (KRED…VLSE), 431–535 (KTVY…MLMK), 562–679 (LPQL…KYRE), and 716–745 (LVDNGEETLQDINNLTDKLRERDEKMQHVS).

This chain is Coiled-coil domain-containing protein 175 (CCDC175), found in Homo sapiens (Human).